The chain runs to 937 residues: Isoleucine--tRNA ligase (937 aa).

Positions 57–67 (PYANGPIHMGH) match the 'HIGH' region motif. Glu-556 provides a ligand contact to L-isoleucyl-5'-AMP. Positions 597-601 (KMSKS) match the 'KMSKS' region motif. Lys-600 is an ATP binding site. Zn(2+) contacts are provided by Cys-895, Cys-898, Cys-915, and Cys-918.

It belongs to the class-I aminoacyl-tRNA synthetase family. IleS type 1 subfamily. Monomer. Zn(2+) is required as a cofactor.

The protein resides in the cytoplasm. The catalysed reaction is tRNA(Ile) + L-isoleucine + ATP = L-isoleucyl-tRNA(Ile) + AMP + diphosphate. In terms of biological role, catalyzes the attachment of isoleucine to tRNA(Ile). As IleRS can inadvertently accommodate and process structurally similar amino acids such as valine, to avoid such errors it has two additional distinct tRNA(Ile)-dependent editing activities. One activity is designated as 'pretransfer' editing and involves the hydrolysis of activated Val-AMP. The other activity is designated 'posttransfer' editing and involves deacylation of mischarged Val-tRNA(Ile). The polypeptide is Isoleucine--tRNA ligase (Levilactobacillus brevis (strain ATCC 367 / BCRC 12310 / CIP 105137 / JCM 1170 / LMG 11437 / NCIMB 947 / NCTC 947) (Lactobacillus brevis)).